The chain runs to 392 residues: DNA replication and repair protein RecF (392 aa).

30-37 is an ATP binding site; the sequence is GPNAAGKT.

This sequence belongs to the RecF family.

Its subcellular location is the cytoplasm. The RecF protein is involved in DNA metabolism; it is required for DNA replication and normal SOS inducibility. RecF binds preferentially to single-stranded, linear DNA. It also seems to bind ATP. This is DNA replication and repair protein RecF from Chloroflexus aggregans (strain MD-66 / DSM 9485).